The sequence spans 612 residues: Isocitrate dehydrogenase kinase/phosphatase (612 aa).

Residues 327-333 (APGIKGL) and Lys348 each bind ATP. Asp383 is an active-site residue. The segment at 593 to 612 (AGAASNEQDAPDAGRSVRAA) is disordered.

It belongs to the AceK family.

The protein resides in the cytoplasm. The enzyme catalyses L-seryl-[isocitrate dehydrogenase] + ATP = O-phospho-L-seryl-[isocitrate dehydrogenase] + ADP + H(+). Bifunctional enzyme which can phosphorylate or dephosphorylate isocitrate dehydrogenase (IDH) on a specific serine residue. This is a regulatory mechanism which enables bacteria to bypass the Krebs cycle via the glyoxylate shunt in response to the source of carbon. When bacteria are grown on glucose, IDH is fully active and unphosphorylated, but when grown on acetate or ethanol, the activity of IDH declines drastically concomitant with its phosphorylation. This chain is Isocitrate dehydrogenase kinase/phosphatase, found in Paraburkholderia xenovorans (strain LB400).